Consider the following 563-residue polypeptide: Arylsulfatase K (563 aa).

The first 17 residues, 1 to 17 (MLLLLVSVIVALALVAP), serve as a signal peptide directing secretion. Residues Asp40 and Cys80 each coordinate Ca(2+). The Nucleophile role is filled by Cys80. Cys80 is modified (3-oxoalanine (Cys)). The N-linked (GlcNAc...) asparagine glycan is linked to Asn108. Lys128 contacts substrate. A glycan (N-linked (GlcNAc...) asparagine) is linked at Asn191. His249 provides a ligand contact to substrate. The N-linked (GlcNAc...) asparagine glycan is linked to Asn260. Residues Asp311 and His312 each contribute to the Ca(2+) site. N-linked (GlcNAc...) asparagine glycosylation is found at Asn373, Asn411, and Asn496.

Belongs to the sulfatase family. Ca(2+) is required as a cofactor. Post-translationally, the conversion to 3-oxoalanine (also known as C-formylglycine, FGly), of a serine or cysteine residue in prokaryotes and of a cysteine residue in eukaryotes, is critical for catalytic activity. The 75-kDa precursor undergoes proteolytic processing to yield a 23 kDa form. In terms of processing, N-glycosylated with both high mannose and complex type sugars.

The protein localises to the secreted. It localises to the lysosome. It catalyses the reaction an aryl sulfate + H2O = a phenol + sulfate + H(+). It carries out the reaction Hydrolysis of the 2-sulfate groups of the 2-O-sulfo-D-glucuronate residues of chondroitin sulfate, heparin and heparitin sulfate.. In terms of biological role, catalyzes the hydrolysis of pseudosubstrates such as p-nitrocatechol sulfate and p-nitrophenyl sulfate. Catalyzes the hydrolysis of the 2-sulfate groups of the 2-O-sulfo-D-glucuronate residues of chondroitin sulfate, heparin and heparitin sulfate. Acts selectively on 2-sulfoglucuronate and lacks activity against 2-sulfoiduronate. This is Arylsulfatase K (Arsk) from Rattus norvegicus (Rat).